A 545-amino-acid polypeptide reads, in one-letter code: Gamma-curcumene synthase (545 aa).

Positions 299, 303, 442, and 450 each coordinate Mg(2+). The DDXXD motif motif lies at 299-303 (DDTYD).

The protein belongs to the terpene synthase family. It depends on Mg(2+) as a cofactor.

Its subcellular location is the cytoplasm. The protein resides in the cytosol. The catalysed reaction is (2E,6E)-farnesyl diphosphate = gamma-curcumene + diphosphate. The protein operates within secondary metabolite biosynthesis; terpenoid biosynthesis. Sesquiterpene synthase involved in gamma-curcumene biosynthesis. In Pogostemon cablin (Patchouli), this protein is Gamma-curcumene synthase.